The sequence spans 144 residues: Large ribosomal subunit protein uL11 (144 aa).

This sequence belongs to the universal ribosomal protein uL11 family. Part of the ribosomal stalk of the 50S ribosomal subunit. Interacts with L10 and the large rRNA to form the base of the stalk. L10 forms an elongated spine to which L12 dimers bind in a sequential fashion forming a multimeric L10(L12)X complex. Post-translationally, one or more lysine residues are methylated.

Its function is as follows. Forms part of the ribosomal stalk which helps the ribosome interact with GTP-bound translation factors. In Marinomonas sp. (strain MWYL1), this protein is Large ribosomal subunit protein uL11.